Reading from the N-terminus, the 187-residue chain is UPF0301 protein plu1183 (187 aa).

The protein belongs to the UPF0301 (AlgH) family.

The chain is UPF0301 protein plu1183 from Photorhabdus laumondii subsp. laumondii (strain DSM 15139 / CIP 105565 / TT01) (Photorhabdus luminescens subsp. laumondii).